Consider the following 281-residue polypeptide: Probable endonuclease 4 (281 aa).

Zn(2+) contacts are provided by H69, H109, E145, D179, H182, H216, D229, H231, and E261.

It belongs to the AP endonuclease 2 family. Zn(2+) serves as cofactor.

It catalyses the reaction Endonucleolytic cleavage to 5'-phosphooligonucleotide end-products.. In terms of biological role, endonuclease IV plays a role in DNA repair. It cleaves phosphodiester bonds at apurinic or apyrimidinic (AP) sites, generating a 3'-hydroxyl group and a 5'-terminal sugar phosphate. This is Probable endonuclease 4 from Pectobacterium carotovorum subsp. carotovorum (strain PC1).